The sequence spans 336 residues: Glycerol-3-phosphate dehydrogenase [NAD(P)+] (336 aa).

NADPH contacts are provided by Ser16, Tyr17, His37, and Lys111. The sn-glycerol 3-phosphate site is built by Lys111, Gly140, and Thr142. Ala144 provides a ligand contact to NADPH. Sn-glycerol 3-phosphate-binding residues include Lys196, Asp249, Ser259, Arg260, and Asn261. Lys196 acts as the Proton acceptor in catalysis. An NADPH-binding site is contributed by Arg260. Residues Val284 and Glu286 each contribute to the NADPH site.

It belongs to the NAD-dependent glycerol-3-phosphate dehydrogenase family.

The protein localises to the cytoplasm. It carries out the reaction sn-glycerol 3-phosphate + NAD(+) = dihydroxyacetone phosphate + NADH + H(+). It catalyses the reaction sn-glycerol 3-phosphate + NADP(+) = dihydroxyacetone phosphate + NADPH + H(+). The protein operates within membrane lipid metabolism; glycerophospholipid metabolism. Catalyzes the reduction of the glycolytic intermediate dihydroxyacetone phosphate (DHAP) to sn-glycerol 3-phosphate (G3P), the key precursor for phospholipid synthesis. This chain is Glycerol-3-phosphate dehydrogenase [NAD(P)+], found in Haemophilus ducreyi (strain 35000HP / ATCC 700724).